The following is a 270-amino-acid chain: Bis(5'-nucleosyl)-tetraphosphatase, symmetrical (270 aa).

This sequence belongs to the Ap4A hydrolase family.

The catalysed reaction is P(1),P(4)-bis(5'-adenosyl) tetraphosphate + H2O = 2 ADP + 2 H(+). Functionally, hydrolyzes diadenosine 5',5'''-P1,P4-tetraphosphate to yield ADP. The protein is Bis(5'-nucleosyl)-tetraphosphatase, symmetrical of Haemophilus ducreyi (strain 35000HP / ATCC 700724).